The chain runs to 128 residues: Cholecystokinin B (128 aa).

The signal sequence occupies residues 1–20 (MCSGVCICLLLAMLSASSKA). Positions 21 to 108 (HQATGSLGED…FDQSHRINDR (88 aa)) are excised as a propeptide. Positions 47–67 (YARASSAGQKKSFQRTDGDQR) are disordered. Tyrosine 110 is modified (sulfotyrosine). Phenylalanine 116 carries the phenylalanine amide modification. A propeptide spanning residues 120-128 (SAEEYEYSS) is cleaved from the precursor.

This sequence belongs to the gastrin/cholecystokinin family. The precursor is cleaved by proteases to produce a number of active cholecystokinins. As to expression, brain and gastrointestinal tract.

Its subcellular location is the secreted. This chain is Cholecystokinin B (cck-b), found in Xenopus laevis (African clawed frog).